The chain runs to 458 residues: ATP synthase subunit beta (458 aa).

148-155 (GGAGVGKT) is a binding site for ATP.

Belongs to the ATPase alpha/beta chains family. In terms of assembly, F-type ATPases have 2 components, CF(1) - the catalytic core - and CF(0) - the membrane proton channel. CF(1) has five subunits: alpha(3), beta(3), gamma(1), delta(1), epsilon(1). CF(0) has three main subunits: a(1), b(2) and c(9-12). The alpha and beta chains form an alternating ring which encloses part of the gamma chain. CF(1) is attached to CF(0) by a central stalk formed by the gamma and epsilon chains, while a peripheral stalk is formed by the delta and b chains.

Its subcellular location is the cell inner membrane. It catalyses the reaction ATP + H2O + 4 H(+)(in) = ADP + phosphate + 5 H(+)(out). Its function is as follows. Produces ATP from ADP in the presence of a proton gradient across the membrane. The catalytic sites are hosted primarily by the beta subunits. The chain is ATP synthase subunit beta from Legionella pneumophila (strain Paris).